The following is a 235-amino-acid chain: 1-(5-phosphoribosyl)-5-[(5-phosphoribosylamino)methylideneamino] imidazole-4-carboxamide isomerase (235 aa).

The active-site Proton acceptor is the Asp-8. Residue Asp-129 is the Proton donor of the active site.

It belongs to the HisA/HisF family.

The protein localises to the cytoplasm. It catalyses the reaction 1-(5-phospho-beta-D-ribosyl)-5-[(5-phospho-beta-D-ribosylamino)methylideneamino]imidazole-4-carboxamide = 5-[(5-phospho-1-deoxy-D-ribulos-1-ylimino)methylamino]-1-(5-phospho-beta-D-ribosyl)imidazole-4-carboxamide. It functions in the pathway amino-acid biosynthesis; L-histidine biosynthesis; L-histidine from 5-phospho-alpha-D-ribose 1-diphosphate: step 4/9. The chain is 1-(5-phosphoribosyl)-5-[(5-phosphoribosylamino)methylideneamino] imidazole-4-carboxamide isomerase from Thermoanaerobacter sp. (strain X514).